A 481-amino-acid chain; its full sequence is Cytochrome P450 monooxygenase dpfgJ (481 aa).

The chain crosses the membrane as a helical span at residues 23 to 43 (LVFTQAAVIGSILFVFLLGLY). N-linked (GlcNAc...) asparagine glycosylation is present at Asn338. Position 427 (Cys427) interacts with heme.

It belongs to the cytochrome P450 family. Heme is required as a cofactor.

It is found in the membrane. Its pathway is secondary metabolite biosynthesis; terpenoid biosynthesis. Cytochrome P450 monooxygenase; part of the gene cluster that mediates the biosynthesis of diterpenoid pyrones. The first step of the pathway is the synthesis of the alpha-pyrone moiety by the polyketide synthase dpfgA via condensation of one acetyl-CoA starter unit with 3 malonyl-CoA units and 2 methylations. The alpha-pyrone is then combined with geranylgeranyl pyrophosphate (GGPP) formed by the GGPP synthase dpfgD through the action of the prenyltransferase dpfgC to yield a linear alpha-pyrone diterpenoid. Subsequent steps in the diterpenoid pyrone biosynthetic pathway involve the decalin core formation, which is initiated by the epoxidation of the C10-C11 olefin by the FAD-dependent oxidoreductase dpfgE, and is followed by a cyclization cascade catalyzed by the terpene cyclase dpfgB. The short chain dehydrogenase/reductase dpfgG then oxidizes the 8S hydroxy group to a ketone and the short chain dehydrogenase/reductase dpfgH reduces the ketone to the 8R hydroxy group to yield higginsianin B. Higginsianin B is further methylated by the methyltransferase dpfgI to produce the intermediate named FDDP B. The cytochrome P450 monooxygenase dfgpJ then catalyzes a three-step oxidation at C-27 to generate a carboxylic acid as well as C-26 hydroxylation. Finally, methyltransferase dpfgK methylates the carboxylic acid generated by dpfgJ, yielding the final diterpenoid pyrones from the pathway which were named FDDP D and FDDP E. The polypeptide is Cytochrome P450 monooxygenase dpfgJ (Gibberella zeae (strain ATCC MYA-4620 / CBS 123657 / FGSC 9075 / NRRL 31084 / PH-1) (Wheat head blight fungus)).